Reading from the N-terminus, the 273-residue chain is Fos-related antigen 1 (273 aa).

Disordered regions lie at residues 1-46 (MYRD…IDSS) and 60-114 (GPTG…RRER). Residues 7 to 35 (EPGPSSGAGSPYGRPAQPPQAQAQTAQQQ) are compositionally biased toward low complexity. Positions 105 to 168 (EERRRVRRER…ERLELVLEAH (64 aa)) constitute a bZIP domain. The tract at residues 107-127 (RRRVRRERNKLAAAKCRNRRK) is basic motif. Residues 133–161 (LQAETDKLEDEKSGLQREIEELQKQKERL) are leucine-zipper. Positions 169-182 (RPICKIPEGDKKDP) are enriched in basic and acidic residues. Positions 169–273 (RPICKIPEGD…PLGSPTLLAL (105 aa)) are disordered. Low complexity-rich tracts occupy residues 217 to 235 (LHTPTLMTTPSLTPFTPSL) and 254 to 273 (SSSSGDPSSDPLGSPTLLAL). Position 267 is a phosphoserine (serine 267).

Belongs to the bZIP family. Fos subfamily. In terms of assembly, heterodimer. Interacts with the BAF multiprotein chromatin-remodeling complex subunits SMARCB1 and SMARCD1. Interacts with ARID1A and JUN.

It is found in the nucleus. In Mus musculus (Mouse), this protein is Fos-related antigen 1 (Fosl1).